Here is a 375-residue protein sequence, read N- to C-terminus: Histidine biosynthesis bifunctional protein HisB (375 aa).

The tract at residues 1–168 (MTPILFVDRD…GIAHELADAP (168 aa)) is histidinol-phosphatase. The active-site Nucleophile is Asp-8. 3 residues coordinate Mg(2+): Asp-8, Asp-10, and Asp-128. Asp-10 (proton donor) is an active-site residue. Positions 169–375 (RRAVVQRNTK…TALPSTKGAL (207 aa)) are imidazoleglycerol-phosphate dehydratase.

In the N-terminal section; belongs to the histidinol-phosphatase family. This sequence in the C-terminal section; belongs to the imidazoleglycerol-phosphate dehydratase family. It depends on Mg(2+) as a cofactor.

The protein resides in the cytoplasm. The enzyme catalyses D-erythro-1-(imidazol-4-yl)glycerol 3-phosphate = 3-(imidazol-4-yl)-2-oxopropyl phosphate + H2O. The catalysed reaction is L-histidinol phosphate + H2O = L-histidinol + phosphate. It functions in the pathway amino-acid biosynthesis; L-histidine biosynthesis; L-histidine from 5-phospho-alpha-D-ribose 1-diphosphate: step 6/9. The protein operates within amino-acid biosynthesis; L-histidine biosynthesis; L-histidine from 5-phospho-alpha-D-ribose 1-diphosphate: step 8/9. The protein is Histidine biosynthesis bifunctional protein HisB of Xanthomonas campestris pv. campestris (strain B100).